A 69-amino-acid chain; its full sequence is Antimicrobial peptide Meucin-18 (69 aa).

The signal sequence occupies residues Met1–Ala16. Positions Glu38–Tyr69 are excised as a propeptide.

Belongs to the non-disulfide-bridged peptide (NDBP) superfamily. Medium-length antimicrobial peptide (group 3) family. Expressed by the venom gland.

The protein resides in the secreted. It localises to the target cell membrane. In terms of biological role, amphipathic peptide that exhibits extensive cytolytic activities against both prokaryotic and eukaryotic cells. Acts by fastly disrupting the bacterial membrane. Is more potent against Gram-positive bacteria than against Gram-negative bacteria, and fungi (LC=25.1-8.3 uM). Shows potent activity against penicillin (MIC=3.0 uM) and methicillin (MIC=1.5-3.0 uM) resistant bacteria. Is lethal to the fungus Beauveria sp (LC=1.9 uM), a highly lethal pathogenic fungus to insects and resistant to many AMPs. Shows hemolytic activity against rabbit erythrocytes (37.7% of inhibition at 6.25 uM) and cytolysis against rat dorsal root ganglions. May act by disrupting the integrity of the bacterial cell membrane. Antibiotic activity is not affected by major negatively charged components of the prokaryotic cell wall (e.g. lipopolysaccharides and lipoteichoic acid). In vivo, intravenous injection into mice tail provokes uncomfortable symptoms with a death rate of 12.5%. In vivo, in a mouse model of lethal peritonitis, shows potent antibiotic activity without cytotoxicity, improving the survival rate. This Mesobuthus eupeus (Lesser Asian scorpion) protein is Antimicrobial peptide Meucin-18.